We begin with the raw amino-acid sequence, 159 residues long: Ribosomal RNA large subunit methyltransferase H (159 aa).

S-adenosyl-L-methionine-binding positions include Leu76, Gly108, and 127–132; that span reads LSKMTY.

It belongs to the RNA methyltransferase RlmH family. Homodimer.

Its subcellular location is the cytoplasm. It catalyses the reaction pseudouridine(1915) in 23S rRNA + S-adenosyl-L-methionine = N(3)-methylpseudouridine(1915) in 23S rRNA + S-adenosyl-L-homocysteine + H(+). Its function is as follows. Specifically methylates the pseudouridine at position 1915 (m3Psi1915) in 23S rRNA. This chain is Ribosomal RNA large subunit methyltransferase H, found in Ruminiclostridium cellulolyticum (strain ATCC 35319 / DSM 5812 / JCM 6584 / H10) (Clostridium cellulolyticum).